Consider the following 557-residue polypeptide: MAKFVFVTGGVVSSIGKGIVAASLGRLLKSRGYSVSILKLDPYLNVDPGTMSPFQHGEVFVTEDGAETDLDLGHYERFTDTAMSRLNSVTTGSIYQSVINKERRGSYNGGTVQVIPHITGEIRDRIHRVASNSNADVVITEIGGTVGDIESLPFLEAIREFRGDVGRQDLAYIHVTLLPFIGTSGELKTKPTQHSVKELRSIGIQPDLLVCRSDRDINDELKRKIGGFCGVPQRAVIPSLDADSIYAVPLTLEDEGLCREVLDVLDLEDHDSDMVDWAQLVHKLRNPGPAVKVALVGKYVQLNDAYLSVVEALRHACLAQDASLDLHWVCAEEIENQGADVLLKGMDAVVVPGGFGNRGVDGKVAAIRWAREQRVPFLGLCLGMQCAVIEWARNLAGLTDATSAELEPGTTHPVIHLLPEQQDVVDLGGTMRLGVYPCRVSAGSLASRLYGEEVVYERHRHRFEFNNAYRNLFLESGYEISGSSPDGRLVELIELPEHPFFTACQYHPEFLSRPGRPHPLFRGLIEAAQQRLPCSPSEAMRQQNNSAAGSSHPSLQP.

An amidoligase domain region spans residues 1–267 (MAKFVFVTGG…CREVLDVLDL (267 aa)). Residue Ser13 coordinates CTP. Ser13 provides a ligand contact to UTP. Residues 14–19 (SIGKGI) and Asp71 contribute to the ATP site. Mg(2+)-binding residues include Asp71 and Glu141. CTP-binding positions include 148-150 (DIE), 188-193 (KTKPTQ), and Lys224. Residues 188 to 193 (KTKPTQ) and Lys224 contribute to the UTP site. The Glutamine amidotransferase type-1 domain occupies 292-534 (KVALVGKYVQ…IEAAQQRLPC (243 aa)). Gly354 lines the L-glutamine pocket. Residue Cys381 is the Nucleophile; for glutamine hydrolysis of the active site. Residues 382-385 (LGMQ), Glu405, and Arg462 contribute to the L-glutamine site. Catalysis depends on residues His507 and Glu509. The interval 532 to 557 (LPCSPSEAMRQQNNSAAGSSHPSLQP) is disordered. A compositionally biased stretch (polar residues) spans 540–557 (MRQQNNSAAGSSHPSLQP).

It belongs to the CTP synthase family. In terms of assembly, homotetramer.

The enzyme catalyses UTP + L-glutamine + ATP + H2O = CTP + L-glutamate + ADP + phosphate + 2 H(+). It carries out the reaction L-glutamine + H2O = L-glutamate + NH4(+). The catalysed reaction is UTP + NH4(+) + ATP = CTP + ADP + phosphate + 2 H(+). Its pathway is pyrimidine metabolism; CTP biosynthesis via de novo pathway; CTP from UDP: step 2/2. Allosterically activated by GTP, when glutamine is the substrate; GTP has no effect on the reaction when ammonia is the substrate. The allosteric effector GTP functions by stabilizing the protein conformation that binds the tetrahedral intermediate(s) formed during glutamine hydrolysis. Inhibited by the product CTP, via allosteric rather than competitive inhibition. Its function is as follows. Catalyzes the ATP-dependent amination of UTP to CTP with either L-glutamine or ammonia as the source of nitrogen. Regulates intracellular CTP levels through interactions with the four ribonucleotide triphosphates. In Synechococcus sp. (strain CC9311), this protein is CTP synthase.